The sequence spans 164 residues: UPF0304 protein YfbU (164 aa).

Belongs to the UPF0304 family.

The protein is UPF0304 protein YfbU of Salmonella choleraesuis (strain SC-B67).